The following is a 314-amino-acid chain: Peroxisome biogenesis factor 10 (314 aa).

At 1–7 (MNTYVAE) the chain is on the peroxisomal matrix side. Residues 8–37 (IGEIVRSQRRDEEYIEDITERLSRVSKELL) traverse the membrane as a helical segment. Residue glycine 38 is a topological domain, cytoplasmic. The helical transmembrane segment at 39–60 (QRTWIRWFPYLKSIASTLYYTS) threads the bilayer. At 61–90 (TVVLGNQTLGEEYVHLFESNGLERTVPSIP) the chain is on the peroxisomal matrix side. The chain crosses the membrane as a helical span at residues 91–110 (SRISFVLLHSAFPLISNYLI). Residues 111–142 (QKAESTLTHPSTESFLGIPIRKNQKARQSFLD) are Cytoplasmic-facing. A helical transmembrane segment spans residues 143 to 166 (VFFWLRTKLFPQLQRAHIALFYIT). Residues 167–197 (GAYYSIARRFTGIRFLSASAHSDIPALKVYR) lie on the Peroxisomal matrix side of the membrane. The helical transmembrane segment at 198–218 (FLGYITLIQLAVSIGISLYSF) threads the bilayer. Residues 219 to 314 (LEQEKFNNKL…PRDVTPLLNL (96 aa)) are Cytoplasmic-facing. Zn(2+) is bound by residues cysteine 255, cysteine 258, cysteine 269, histidine 271, cysteine 274, cysteine 277, cysteine 296, and cysteine 299. The RING-type zinc finger occupies 255-300 (CSICLENKNPSALFCGHLFCWTCIQEHAVAATSSASTSSARCPQCR).

This sequence belongs to the pex2/pex10/pex12 family. As to quaternary structure, component of the PEX2-PEX10-PEX12 retrotranslocation channel.

It is found in the peroxisome membrane. The catalysed reaction is S-ubiquitinyl-[E2 ubiquitin-conjugating enzyme]-L-cysteine + [acceptor protein]-L-lysine = [E2 ubiquitin-conjugating enzyme]-L-cysteine + N(6)-ubiquitinyl-[acceptor protein]-L-lysine.. Its pathway is protein modification; protein ubiquitination. The E3 ubiquitin-protein ligase activity is stimulated by PEX12/prx-12. Its function is as follows. E3 ubiquitin-protein ligase component of a retrotranslocation channel required for peroxisome organization by mediating export of the PEX5/prx-5 receptor from peroxisomes to the cytosol, thereby promoting PEX5/prx-5 recycling. The retrotranslocation channel is composed of PEX2/prx-2, PEX10/prx-10 and PEX12/prx-12; each subunit contributing transmembrane segments that coassemble into an open channel that specifically allows the passage of PEX5/prx-5 through the peroxisomal membrane. PEX10/prx-10 also regulates PEX5 recycling by acting as a E3 ubiquitin-protein ligase. When PEX5/prx-5 recycling is compromised, PEX10/prx-10 catalyzes polyubiquitination of PEX5/prx-5 during its passage through the retrotranslocation channel, leading to its degradation. The chain is Peroxisome biogenesis factor 10 from Caenorhabditis elegans.